The primary structure comprises 266 residues: GTP cyclohydrolase III (266 aa).

Belongs to the archaeal-type GTP cyclohydrolase family.

The catalysed reaction is GTP + 3 H2O = 2-amino-5-formylamino-6-(5-phospho-D-ribosylamino)pyrimidin-4(3H)-one + 2 phosphate + 2 H(+). Catalyzes the formation of 2-amino-5-formylamino-6-ribofuranosylamino-4(3H)-pyrimidinone ribonucleotide monophosphate and inorganic phosphate from GTP. Also has an independent pyrophosphate phosphohydrolase activity. In Methanococcus vannielii (strain ATCC 35089 / DSM 1224 / JCM 13029 / OCM 148 / SB), this protein is GTP cyclohydrolase III.